Reading from the N-terminus, the 187-residue chain is Major allergen Equ c 1 (187 aa).

The segment at residues 1-15 is a signal peptide (or 16, or 21); that stretch reads MKLLLLCLGLILVCA. 2 N-linked (GlcNAc...) asparagine glycosylation sites follow: Asn-53 and Asn-68. Cys-83 and Cys-176 form a disulfide bridge.

This sequence belongs to the calycin superfamily. Lipocalin family. In terms of assembly, homodimer. In terms of processing, several N-terminal ends may be due to cleavage by signal peptidase at different sites or may be generated by proteolytic processing of the secreted protein. Post-translationally, analysis of the sugar composition shows the presence of GalNAc, Gal, NeuAc, GlcNAc, and Man. May be also O-glycosylated. In terms of tissue distribution, expressed in liver and in sublingual and submaxillary salivary glands. Highly concentrated in secretory fluid such as saliva and urine as well as in hair dandruff extract.

It is found in the secreted. The polypeptide is Major allergen Equ c 1 (Equus caballus (Horse)).